Here is a 342-residue protein sequence, read N- to C-terminus: Methylthioribose-1-phosphate isomerase (342 aa).

Residues 49–51 (RGA), Arg-86, and Gln-187 contribute to the substrate site. Asp-228 functions as the Proton donor in the catalytic mechanism. 238–239 (NK) contributes to the substrate binding site.

Belongs to the eIF-2B alpha/beta/delta subunits family. MtnA subfamily.

The catalysed reaction is 5-(methylsulfanyl)-alpha-D-ribose 1-phosphate = 5-(methylsulfanyl)-D-ribulose 1-phosphate. The protein operates within amino-acid biosynthesis; L-methionine biosynthesis via salvage pathway; L-methionine from S-methyl-5-thio-alpha-D-ribose 1-phosphate: step 1/6. Functionally, catalyzes the interconversion of methylthioribose-1-phosphate (MTR-1-P) into methylthioribulose-1-phosphate (MTRu-1-P). This Serratia proteamaculans (strain 568) protein is Methylthioribose-1-phosphate isomerase.